Here is a 115-residue protein sequence, read N- to C-terminus: Large ribosomal subunit protein eL36 (115 aa).

Belongs to the eukaryotic ribosomal protein eL36 family. As to quaternary structure, component of the large ribosomal subunit.

Its subcellular location is the cytoplasm. The protein resides in the cytosol. Its function is as follows. Component of the large ribosomal subunit. The protein is Large ribosomal subunit protein eL36 (RpL36) of Drosophila melanogaster (Fruit fly).